Here is a 331-residue protein sequence, read N- to C-terminus: Pectate lyase B (331 aa).

The signal sequence occupies residues 1–25; sequence MKFTGSPLLWPSWLPLPAPPPPLPS. N-linked (GlcNAc...) asparagine glycosylation is present at asparagine 99. 3 residues coordinate Ca(2+): aspartate 139, aspartate 169, and aspartate 173. Residue arginine 226 is part of the active site.

Belongs to the polysaccharide lyase 1 family. Ca(2+) is required as a cofactor.

It is found in the secreted. The catalysed reaction is Eliminative cleavage of (1-&gt;4)-alpha-D-galacturonan to give oligosaccharides with 4-deoxy-alpha-D-galact-4-enuronosyl groups at their non-reducing ends.. The protein operates within glycan metabolism; pectin degradation; 2-dehydro-3-deoxy-D-gluconate from pectin: step 2/5. Functionally, acts as a virulence factor active in plant tissue maceration. This chain is Pectate lyase B (PLB), found in Colletotrichum gloeosporioides (Anthracnose fungus).